We begin with the raw amino-acid sequence, 367 residues long: Dihydroxyacetone phosphate transaminase Cj1437c (367 aa).

Lysine 219 is modified (N6-(pyridoxal phosphate)lysine).

This sequence belongs to the class-II pyridoxal-phosphate-dependent aminotransferase family. Pyridoxal 5'-phosphate is required as a cofactor.

The catalysed reaction is dihydroxyacetone phosphate + L-glutamate = (S)-serinol phosphate + 2-oxoglutarate. It functions in the pathway capsule biogenesis; capsule polysaccharide biosynthesis. In terms of biological role, pyridoxal phosphate (PLP)-dependent transaminase involved in the biosynthesis of amidated D-glucuronic acid structures found on the capsular polysaccharide (CPS) of C.jejuni. Catalyzes the transamination of dihydroxyacetone phosphate (DHAP) to (S)-serinol phosphate in the presence of L-glutamate. Less active with L-aspartate. No activity with dihydroxyacetone or L-alanine. The sequence is that of Dihydroxyacetone phosphate transaminase Cj1437c from Campylobacter jejuni subsp. jejuni serotype O:2 (strain ATCC 700819 / NCTC 11168).